Reading from the N-terminus, the 437-residue chain is Adenylosuccinate synthetase (437 aa).

GTP contacts are provided by residues 13–19 (GDEGKGK) and 41–43 (GHT). Asp14 serves as the catalytic Proton acceptor. Residues Asp14 and Gly41 each contribute to the Mg(2+) site. IMP is bound by residues 14–17 (DEGK), 39–42 (NAGH), Thr130, Arg144, Gln225, Thr240, and Arg310. The Proton donor role is filled by His42. Residue 306–312 (ATTGRLR) participates in substrate binding. GTP is bound by residues Arg312, 338 to 340 (KLD), and 421 to 423 (STG).

This sequence belongs to the adenylosuccinate synthetase family. Homodimer. Mg(2+) is required as a cofactor.

Its subcellular location is the cytoplasm. It catalyses the reaction IMP + L-aspartate + GTP = N(6)-(1,2-dicarboxyethyl)-AMP + GDP + phosphate + 2 H(+). The protein operates within purine metabolism; AMP biosynthesis via de novo pathway; AMP from IMP: step 1/2. Plays an important role in the de novo pathway of purine nucleotide biosynthesis. Catalyzes the first committed step in the biosynthesis of AMP from IMP. The chain is Adenylosuccinate synthetase from Psychromonas ingrahamii (strain DSM 17664 / CCUG 51855 / 37).